A 128-amino-acid chain; its full sequence is MNLIQQLEQEEIARLTQNKTIPAFAPGDTVIVQVKVKEGTRERLQAYEGVVIAKRNRGLNSNFIVRKISSGEGVERTFQTYSPLVDSIEVKRRGDVRRAKLYYLRERSGKSARIKEKLNYKAPAAKKA.

The protein belongs to the bacterial ribosomal protein bL19 family.

This protein is located at the 30S-50S ribosomal subunit interface and may play a role in the structure and function of the aminoacyl-tRNA binding site. In Aromatoleum aromaticum (strain DSM 19018 / LMG 30748 / EbN1) (Azoarcus sp. (strain EbN1)), this protein is Large ribosomal subunit protein bL19.